Reading from the N-terminus, the 1199-residue chain is DNA-directed RNA polymerase subunit beta' (1199 aa).

Zn(2+)-binding residues include Cys60, Cys62, Cys75, and Cys78. Asp449, Asp451, and Asp453 together coordinate Mg(2+). Residues Cys818, Cys892, Cys899, and Cys902 each coordinate Zn(2+).

It belongs to the RNA polymerase beta' chain family. In terms of assembly, the RNAP catalytic core consists of 2 alpha, 1 beta, 1 beta' and 1 omega subunit. When a sigma factor is associated with the core the holoenzyme is formed, which can initiate transcription. It depends on Mg(2+) as a cofactor. The cofactor is Zn(2+).

The catalysed reaction is RNA(n) + a ribonucleoside 5'-triphosphate = RNA(n+1) + diphosphate. DNA-dependent RNA polymerase catalyzes the transcription of DNA into RNA using the four ribonucleoside triphosphates as substrates. The polypeptide is DNA-directed RNA polymerase subunit beta' (Exiguobacterium sibiricum (strain DSM 17290 / CCUG 55495 / CIP 109462 / JCM 13490 / 255-15)).